Reading from the N-terminus, the 216-residue chain is Uracil phosphoribosyltransferase (216 aa).

Residue 30-34 (KTLVR) participates in GTP binding. 5-phospho-alpha-D-ribose 1-diphosphate is bound by residues R80, R105, and 140–148 (DPMIATAST). Uracil contacts are provided by residues I203 and 208-210 (GDA). Residue D209 coordinates 5-phospho-alpha-D-ribose 1-diphosphate.

Belongs to the UPRTase family. The cofactor is Mg(2+).

The catalysed reaction is UMP + diphosphate = 5-phospho-alpha-D-ribose 1-diphosphate + uracil. It participates in pyrimidine metabolism; UMP biosynthesis via salvage pathway; UMP from uracil: step 1/1. Its activity is regulated as follows. Allosterically activated by GTP. Functionally, catalyzes the conversion of uracil and 5-phospho-alpha-D-ribose 1-diphosphate (PRPP) to UMP and diphosphate. This chain is Uracil phosphoribosyltransferase, found in Sulfurisphaera tokodaii (strain DSM 16993 / JCM 10545 / NBRC 100140 / 7) (Sulfolobus tokodaii).